We begin with the raw amino-acid sequence, 135 residues long: ATP synthase epsilon chain (135 aa).

This sequence belongs to the ATPase epsilon chain family. In terms of assembly, F-type ATPases have 2 components, CF(1) - the catalytic core - and CF(0) - the membrane proton channel. CF(1) has five subunits: alpha(3), beta(3), gamma(1), delta(1), epsilon(1). CF(0) has three main subunits: a, b and c.

Its subcellular location is the cell inner membrane. In terms of biological role, produces ATP from ADP in the presence of a proton gradient across the membrane. In Bradyrhizobium sp. (strain BTAi1 / ATCC BAA-1182), this protein is ATP synthase epsilon chain.